The following is a 310-amino-acid chain: D-alanyl-D-alanine endopeptidase (310 aa).

The N-terminal stretch at 1–23 (MRNRLLSLVTLFLSLSVATAVSA) is a signal peptide. The active-site Acyl-ester intermediate is the Ser66. Lys69 acts as the Proton acceptor in catalysis. The active site involves Ser123. Position 230 (Lys230) interacts with substrate.

The protein belongs to the peptidase S11 family.

The protein localises to the periplasm. In terms of biological role, cell wall formation. In Pseudomonas aeruginosa (strain ATCC 15692 / DSM 22644 / CIP 104116 / JCM 14847 / LMG 12228 / 1C / PRS 101 / PAO1), this protein is D-alanyl-D-alanine endopeptidase (pbpG).